Reading from the N-terminus, the 492-residue chain is Polyamine oxidase 5 (492 aa).

Positions 55, 63, 244, and 431 each coordinate FAD. Residues Ser-490–Leu-492 carry the Microbody targeting signal motif.

Belongs to the flavin monoamine oxidase family. FAD serves as cofactor. Widely expressed.

The protein resides in the peroxisome. It carries out the reaction spermine + O2 + H2O = 3-aminopropanal + spermidine + H2O2. The enzyme catalyses norspermine + O2 + H2O = norspermidine + 3-aminopropanal + H2O2. The catalysed reaction is thermospermine + O2 + H2O = 3-aminopropanal + spermidine + H2O2. It participates in amine and polyamine degradation; spermine degradation. Functionally, flavoenzyme involved in polyamine back-conversion. Catalyzes the oxidation of the secondary amino group of polyamines, such as spermine. Substrate preference is spermine &gt; thermospermine &gt; norspermine. No activity detected when putrescine, spermidine or N(1)-acetylspermidine are used as substrates. Plays an important role in the regulation of polyamine intracellular concentration. May play a role in producing hydrogen peroxide during seed germination. In Oryza sativa subsp. japonica (Rice), this protein is Polyamine oxidase 5.